The sequence spans 323 residues: tRNA dimethylallyltransferase (323 aa).

An ATP-binding site is contributed by 12–19 (GPTAAGKT). 14-19 (TAAGKT) provides a ligand contact to substrate. Interaction with substrate tRNA stretches follow at residues 37-40 (DSAL) and 161-165 (QRLIR).

The protein belongs to the IPP transferase family. As to quaternary structure, monomer. The cofactor is Mg(2+).

It carries out the reaction adenosine(37) in tRNA + dimethylallyl diphosphate = N(6)-dimethylallyladenosine(37) in tRNA + diphosphate. Its function is as follows. Catalyzes the transfer of a dimethylallyl group onto the adenine at position 37 in tRNAs that read codons beginning with uridine, leading to the formation of N6-(dimethylallyl)adenosine (i(6)A). In Pseudomonas entomophila (strain L48), this protein is tRNA dimethylallyltransferase.